The following is a 361-amino-acid chain: Transcription factor Sox-18B (361 aa).

The disordered stretch occupies residues 17-65; sequence VNSTWVPPADTVPEASLTPHSPPAPDSPAPSPKPGYGYSACEEKPGDPR. A compositionally biased stretch (pro residues) spans 36 to 49; sequence HSPPAPDSPAPSPK. Positions 66–134 form a DNA-binding region, HMG box; that stretch reads IRRPMNAFMV…QHLQDHPNYK (69 aa). Interaction with DNA stretches follow at residues 68 to 81 and 92 to 104; these read RPMNAFMVWAKDER and HNAVLSKMLGQSW. The segment at 127-163 is disordered; it reads LQDHPNYKYRPRRKKQAKKLKRMDPSHHLRNEGYTGG. A compositionally biased stretch (basic residues) spans 133-147; that stretch reads YKYRPRRKKQAKKLK. The important for transcriptional activation stretch occupies residues 147–208; it reads KRMDPSHHLR…VLEPSEPAFF (62 aa). Over residues 148–157 the composition is skewed to basic and acidic residues; the sequence is RMDPSHHLRN. The 127-residue stretch at 234–360 folds into the Sox C-terminal domain; the sequence is KTLREISLPY…TAMYYTPCIT (127 aa). The 9aaTAD signature appears at 306-314; it reads NEFDQYLNM.

Expressed in the adult spleen, lung, heart and kidney, and at a lower level in the adult testis, liver and brain.

Its subcellular location is the nucleus. In terms of biological role, transcription factor. Binds to the consensus DNA sequence 5'-AACAAT-3'. Also binds 5'-CACAAT-3' and 5'-AATAAT-3' but with a lower affinity. Acts partially redundantly with sox7 during cardiogenesis, acting indirectly through nodal-signaling to induce mesodermal, organizer and endodermal tissues, which then interact to initiate cardiogenesis. Also acts as an antagonist of beta-catenin signaling. This chain is Transcription factor Sox-18B (sox18-b), found in Xenopus laevis (African clawed frog).